Consider the following 241-residue polypeptide: MRSGVIAQKVGMTRVFTDAGEHVPVTVLKIDQCQVVAHRTVEKNGYVALQVGVGKAKVKNVSAAERGRFAVAKVEPKKKLAEFRVTEDALIPVGAEITADHFIPGQFVDVTGTTTGKGFAGGIKRWNFGGLRATHGVSISHRSIGSTGGRQDPGKTFKNKKMPGHLGVERVTTQNLRVVRTDPERGLILVEGAVPGVAGGWIQIRDAVKRKLPADVPLPGKFRENGASAPATEAPAAEETA.

Disordered regions lie at residues 140 to 162 (SHRSIGSTGGRQDPGKTFKNKKM) and 217 to 241 (PLPGKFRENGASAPATEAPAAEETA). Glutamine 151 is modified (N5-methylglutamine). The span at 229–241 (APATEAPAAEETA) shows a compositional bias: low complexity.

This sequence belongs to the universal ribosomal protein uL3 family. As to quaternary structure, part of the 50S ribosomal subunit. Forms a cluster with proteins L14 and L19. Post-translationally, methylated by PrmB.

In terms of biological role, one of the primary rRNA binding proteins, it binds directly near the 3'-end of the 23S rRNA, where it nucleates assembly of the 50S subunit. This is Large ribosomal subunit protein uL3 from Methylobacterium radiotolerans (strain ATCC 27329 / DSM 1819 / JCM 2831 / NBRC 15690 / NCIMB 10815 / 0-1).